An 815-amino-acid polypeptide reads, in one-letter code: SNF1 protein kinase subunit beta-1 (815 aa).

Over residues 1-11 (MGNSPSTQDPS) the composition is skewed to polar residues. 2 disordered regions span residues 1-88 (MGNS…TIDK) and 117-148 (SDDHDVGAPEEQVKSPSFLSPGPSMATVKQTK). Gly-2 carries the N-myristoyl glycine lipid modification. Residues 12–31 (HSTKKEHGHHFHDAFNKDRQ) show a composition bias toward basic and acidic residues. Positions 32–42 (GSITSQLFNNR) are enriched in polar residues. At Ser-33 the chain carries Phosphoserine. 2 stretches are compositionally biased toward basic and acidic residues: residues 72–88 (PSTDCDGRMSSDTTIDK) and 117–129 (SDDHDVGAPEEQV). 6 positions are modified to phosphoserine: Ser-181, Ser-198, Ser-200, Ser-206, Ser-209, and Ser-220. Disordered stretches follow at residues 310-335 (SHANNNGNIENNTRNKGNAGGSNDDF), 363-389 (HQNKTKKAQNKKIRSASNSRRSSFASL), and 410-444 (PLHPIINDNESQYSAPQHREISHHSNSMSSMSSIS). The span at 313-326 (NNNGNIENNTRNKG) shows a compositional bias: low complexity. Ser-331 carries the phosphoserine modification. Residues 363–376 (HQNKTKKAQNKKIR) are compositionally biased toward basic residues. Composition is skewed to low complexity over residues 377 to 389 (SASNSRRSSFASL) and 433 to 444 (HSNSMSSMSSIS). Positions 473-716 (VSTDIASALK…LQQGGNIDAE (244 aa)) are kinase-interacting sequence (KIS); required for interaction with SNF1. Residues Ser-494 and Ser-497 each carry the phosphoserine modification. A disordered region spans residues 583 to 616 (TLDEELPKRPELKRFPSSSRKSSYYSAKGVERPS). Basic and acidic residues predominate over residues 587-596 (ELPKRPELKR). The segment covering 599-608 (SSSRKSSYYS) has biased composition (low complexity). Ser-643 bears the Phosphoserine mark. The tract at residues 724–804 (SRYPVPDLPI…FITQVVYAPC (81 aa)) is association with SNF1 kinase complex (ASC) domain; required for interaction with SNF4.

It belongs to the 5'-AMP-activated protein kinase beta subunit family. In terms of assembly, component of the SNF1 kinase complex, a heterotrimeric complex composed of the catalytic alpha subunit SNF1, one of the three related beta subunits SIP1, SIP2 or GAL83, and the regulatory gamma subunit SNF4. The beta subunit serves as a bridge between the catalytic and the regulatory subunit. Interacts (via KIS domain) with SNF1. Interacts (via ASC domain) with SNF4. Post-translationally, phosphorylated by SNF1 in vitro.

Its subcellular location is the cytoplasm. The protein resides in the vacuole membrane. Its function is as follows. Beta subunit of the SNF1 kinase complex, which is required for transcriptional, metabolic, and developmental adaptations in response to glucose limitation. Has a structural role, mediating heterotrimer formation, and a regulatory role, defining carbon source-regulated subcellular location and substrate specificity of the SNF1 kinase complex. Promotes the PKA-regulated relocalization of the SNF1 kinase complex to the vacuolar membrane in response to various types of carbon stress. The polypeptide is SNF1 protein kinase subunit beta-1 (SIP1) (Saccharomyces cerevisiae (strain YJM789) (Baker's yeast)).